The chain runs to 696 residues: Glycine--tRNA ligase beta subunit (696 aa).

The protein belongs to the class-II aminoacyl-tRNA synthetase family. Tetramer of two alpha and two beta subunits.

It localises to the cytoplasm. The catalysed reaction is tRNA(Gly) + glycine + ATP = glycyl-tRNA(Gly) + AMP + diphosphate. The polypeptide is Glycine--tRNA ligase beta subunit (Nitratidesulfovibrio vulgaris (strain DP4) (Desulfovibrio vulgaris)).